The chain runs to 457 residues: Glycine receptor subunit alpha-1 (457 aa).

An N-terminal signal peptide occupies residues 1–28 (MYSFNTLRFYLWETIVFFSLAASKEAEA). The Extracellular portion of the chain corresponds to 29 to 250 (ARSAPKPMSP…RFHLERQMGY (222 aa)). Asn-66 carries an N-linked (GlcNAc...) asparagine glycan. Glycine is bound by residues Arg-93 and Ser-157. Cysteines 166 and 180 form a disulfide. Glu-220 and Asp-222 together coordinate Zn(2+). A disulfide bond links Cys-226 and Cys-237. 230–235 (YNTGKF) lines the strychnine pocket. A glycine-binding site is contributed by Thr-232. His-243 contributes to the Zn(2+) binding site. A helical membrane pass occupies residues 251 to 272 (YLIQMYIPSLLIVILSWISFWI). The Cytoplasmic portion of the chain corresponds to 273 to 277 (NMDAA). Residues 278 to 298 (PARVGLGITTVLTMTTQSSGS) traverse the membrane as a helical segment. Topologically, residues 299–309 (RASLPKVSYVK) are extracellular. The chain crosses the membrane as a helical span at residues 310–330 (AIDIWMAVCLLFVFSALLEYA). Topologically, residues 331-425 (AVNFVSRQHK…FIQRAKKIDK (95 aa)) are cytoplasmic. Residues 391-410 (KGANNNNTTNPPPAPSKSPE) are disordered. The chain crosses the membrane as a helical span at residues 426-446 (ISRIGFPMAFLIFNMFYWIIY). Residues 447–457 (KIVRREDVHNK) are Extracellular-facing.

This sequence belongs to the ligand-gated ion channel (TC 1.A.9) family. Glycine receptor (TC 1.A.9.3) subfamily. GLRA1 sub-subfamily. As to quaternary structure, interacts with GLRB to form heteropentameric channels; this is probably the predominant form in vivo. Heteropentamer composed of four GLRA1 subunits and one GLRB subunit. Heteropentamer composed of two GLRA1 and three GLRB. Heteropentamer composed of three GLRA1 and two GLRB. Homopentamer (in vitro). Both homopentamers and heteropentamers form functional ion channels, but their characteristics are subtly different. In terms of tissue distribution, detected in spinal cord neurons. Detected in brain stem neurons. Detected at lower levels in hippocampus and cerebellum. Detected in the inner plexiform layer of the retina (at protein level).

It localises to the postsynaptic cell membrane. Its subcellular location is the synapse. The protein localises to the perikaryon. The protein resides in the cell projection. It is found in the dendrite. It localises to the cell membrane. It catalyses the reaction chloride(in) = chloride(out). Its activity is regulated as follows. Channel opening is triggered by extracellular glycine. Channel characteristics depend on the subunit composition; heteropentameric channels are activated by lower glycine levels and display faster desensitization. Channel opening is also triggered by taurine and beta-alanine. Inhibited by strychnine. Strychnine binding locks the channel in a closed conformation and prevents channel opening in response to extracellular glycine. Inhibited by picrotoxin. Channel activity is enhanced by 5 uM Zn(2+) and inhibited by 100 uM Zn(2+). Its function is as follows. Subunit of heteromeric glycine-gated chloride channels. Plays an important role in the down-regulation of neuronal excitability. Contributes to the generation of inhibitory postsynaptic currents. Channel activity is potentiated by ethanol. Potentiation of channel activity by intoxicating levels of ethanol contribute to the sedative effects of ethanol. This chain is Glycine receptor subunit alpha-1 (Glra1), found in Mus musculus (Mouse).